Consider the following 125-residue polypeptide: Glycine cleavage system H protein (125 aa).

The Lipoyl-binding domain occupies 19-101 (VAVVGISDYA…EGKGWFMKLK (83 aa)). Lysine 60 is modified (N6-lipoyllysine).

Belongs to the GcvH family. The glycine cleavage system is composed of four proteins: P, T, L and H. (R)-lipoate is required as a cofactor.

In terms of biological role, the glycine cleavage system catalyzes the degradation of glycine. The H protein shuttles the methylamine group of glycine from the P protein to the T protein. This Xanthobacter autotrophicus (strain ATCC BAA-1158 / Py2) protein is Glycine cleavage system H protein.